Consider the following 618-residue polypeptide: Glucose starvation modulator protein 1 (618 aa).

The segment at residues 20–48 (CEFCHTKHIQCDVGRPCQNCLKRNIGKFC) is a DNA-binding region (zn(2)-C6 fungal-type). The tract at residues 325 to 352 (ANANTHPSHNAKLESECDSSSHSDADLE) is disordered. Basic and acidic residues predominate over residues 335–352 (AKLESECDSSSHSDADLE). Residues 466-538 (LLDLENMAKL…QIFNELLAFG (73 aa)) enclose the PAS domain.

It belongs to the ERT1/acuK family.

It is found in the nucleus. In terms of biological role, transcription factor which regulates nonfermentable carbon utilization. Binds specifically to 5'-CGGN(8)CGG-3' and 5'-CGGN(9)CGG-3' sequences in the promoter region. In Saccharomyces cerevisiae (strain ATCC 204508 / S288c) (Baker's yeast), this protein is Glucose starvation modulator protein 1 (GSM1).